We begin with the raw amino-acid sequence, 545 residues long: MNPSTAQARVVVDELVRGGVRDVVLCPGSRNAPLAFALQAADAAGRLRLHMRIDERTAGFLAIGLAISAGAPVPVVMTSGTAVANLGPAVLEANYARVPLIVLSANRPYEMLGTGANQTVEQLGLFGSQVRATISLGLAEADGAGAGSYDQQNSVWRSAVCRVLAAARGTRSGNAGPVHFDIPLREPLVPDLAEGEAEPAGRAGGAPWTATQYATLDVPLEIDLTPDTVVVSGHGAGLRPELAHLPTVAEPTAPMHGPALHPLALPLLTPRQAIITGRPTLHRQVSRLLADPAVTVYALTTGPRWPDVSGNVVGTGTRAVTSGGPRPEWLAHCRELDEKARQVVRAELAGHPKPTGLHVAAVVMDALREGDQLLLGASNPVRDAALVATPRPGVRVLSNRGVAGIDGTVSTAVGAALAHPGRTIALIGDLTFLHDAAGLLIGRGEPRPADLTIVVANDDGGGIFELLEQGDPQYAGVFERVFGTPHGMDLAALCAAYRIPHRQVDPAELAAELAGDAHGLRVLEVITERSSLRELHATVRAKIAP.

This sequence belongs to the TPP enzyme family. MenD subfamily. Homodimer. Requires Mg(2+) as cofactor. The cofactor is Mn(2+). Thiamine diphosphate is required as a cofactor.

It catalyses the reaction isochorismate + 2-oxoglutarate + H(+) = 5-enolpyruvoyl-6-hydroxy-2-succinyl-cyclohex-3-ene-1-carboxylate + CO2. Its pathway is quinol/quinone metabolism; 1,4-dihydroxy-2-naphthoate biosynthesis; 1,4-dihydroxy-2-naphthoate from chorismate: step 2/7. The protein operates within quinol/quinone metabolism; menaquinone biosynthesis. Functionally, catalyzes the thiamine diphosphate-dependent decarboxylation of 2-oxoglutarate and the subsequent addition of the resulting succinic semialdehyde-thiamine pyrophosphate anion to isochorismate to yield 2-succinyl-5-enolpyruvyl-6-hydroxy-3-cyclohexene-1-carboxylate (SEPHCHC). This is 2-succinyl-5-enolpyruvyl-6-hydroxy-3-cyclohexene-1-carboxylate synthase from Nocardia farcinica (strain IFM 10152).